Reading from the N-terminus, the 377-residue chain is UPF0754 membrane protein lin2327 (377 aa).

Helical transmembrane passes span 1 to 21 (MSVLFTILLMAVIGGFIGAMT) and 357 to 377 (YLGGILGGFIGIIQGILAMWI).

Belongs to the UPF0754 family.

It localises to the cell membrane. The protein is UPF0754 membrane protein lin2327 of Listeria innocua serovar 6a (strain ATCC BAA-680 / CLIP 11262).